We begin with the raw amino-acid sequence, 31 residues long: Photosystem I reaction center subunit XII (31 aa).

The helical transmembrane segment at 7 to 26 threads the bilayer; the sequence is QIYIALLTALIPAFFALKLG.

This sequence belongs to the PsaM family.

It is found in the plastid. The protein resides in the chloroplast thylakoid membrane. This Euglena mutabilis protein is Photosystem I reaction center subunit XII.